Here is a 1508-residue protein sequence, read N- to C-terminus: DNA-directed RNA polymerase subunit beta' (1508 aa).

Cysteine 71, cysteine 73, cysteine 86, and cysteine 89 together coordinate Zn(2+). Mg(2+) contacts are provided by aspartate 470, aspartate 472, and aspartate 474. Residues cysteine 804, cysteine 878, cysteine 885, and cysteine 888 each coordinate Zn(2+).

The protein belongs to the RNA polymerase beta' chain family. As to quaternary structure, the RNAP catalytic core consists of 2 alpha, 1 beta, 1 beta' and 1 omega subunit. When a sigma factor is associated with the core the holoenzyme is formed, which can initiate transcription. Requires Mg(2+) as cofactor. Zn(2+) serves as cofactor.

It carries out the reaction RNA(n) + a ribonucleoside 5'-triphosphate = RNA(n+1) + diphosphate. Functionally, DNA-dependent RNA polymerase catalyzes the transcription of DNA into RNA using the four ribonucleoside triphosphates as substrates. The sequence is that of DNA-directed RNA polymerase subunit beta' from Campylobacter fetus subsp. fetus (strain 82-40).